The chain runs to 257 residues: uncharacterized protein (257 aa).

The N-terminal stretch at 1–22 (MRYLKRLSWYISILILIVVIAG) is a signal peptide. Residue C23 is the site of N-palmitoyl cysteine attachment. A lipid anchor (S-diacylglycerol cysteine) is attached at C23.

Belongs to the staphylococcal tandem lipoprotein family.

Its subcellular location is the cell membrane. This is an uncharacterized protein from Staphylococcus aureus (strain N315).